A 382-amino-acid chain; its full sequence is Lactaldehyde reductase (382 aa).

NAD(+) is bound by residues Asp-38, Asn-70, 97–98, 139–143, Asn-150, Lys-161, and 180–184; these read GS, TTAGT, and MMDGM. Fe cation contacts are provided by Asp-195, His-199, His-262, and His-276.

This sequence belongs to the iron-containing alcohol dehydrogenase family. As to quaternary structure, homodimer. Fe cation is required as a cofactor.

It catalyses the reaction (R)-propane-1,2-diol + NAD(+) = (R)-lactaldehyde + NADH + H(+). The enzyme catalyses (S)-propane-1,2-diol + NAD(+) = (S)-lactaldehyde + NADH + H(+). The protein operates within carbohydrate degradation; L-fucose degradation. The protein is Lactaldehyde reductase (fucO) of Escherichia coli O157:H7.